Reading from the N-terminus, the 216-residue chain is Vascular endothelial growth factor A (216 aa).

The signal sequence occupies residues 1–26 (MNFLLTWIHWGLAALLYLQSAELSKA). Disulfide bonds link Cys52–Cys94, Cys83–Cys128, and Cys87–Cys130. Asn101 carries N-linked (GlcNAc...) asparagine glycosylation. Residues 132-141 (PKKDVKNKQE) are compositionally biased toward basic and acidic residues. A disordered region spans residues 132 to 167 (PKKDVKNKQEKKSKRGKGKGQKRKRKKGRYKPPSFH). Basic residues predominate over residues 142–161 (KKSKRGKGKGQKRKRKKGRY).

It belongs to the PDGF/VEGF growth factor family. In terms of assembly, homodimer; disulfide-linked. Also found as heterodimer with PGF.

Functionally, growth factor active in angiogenesis, vasculogenesis and endothelial cell growth. Induces endothelial cell proliferation, promotes cell migration, inhibits apoptosis and induces permeabilization of blood vessels. Binds to the FLT1/VEGFR1 and KDR/VEGFR2 receptors, heparan sulfate and heparin. The chain is Vascular endothelial growth factor A (VEGFA) from Gallus gallus (Chicken).